Here is a 1738-residue protein sequence, read N- to C-terminus: Interaptin (1738 aa).

Residues Met-1–Tyr-248 form an actin-binding region. Residues Met-1 to Pro-1705 lie on the Cytoplasmic side of the membrane. Calponin-homology (CH) domains lie at Ile-22–Gln-128 and Thr-146–Gln-249. Disordered regions lie at residues Ser-285–Ser-350, Ile-1068–Asp-1090, and Leu-1589–Ile-1627. The span at Gln-292–Asn-301 shows a compositional bias: low complexity. Polar residues predominate over residues Leu-302–Lys-316. Low complexity-rich tracts occupy residues Ser-317 to Thr-344, Ile-1068 to Leu-1086, and Leu-1589 to Pro-1617. A coiled-coil region spans residues Glu-373–Gln-1598. The chain crosses the membrane as a helical; Anchor for type IV membrane protein span at residues Ile-1706 to Phe-1726.

Belongs to the alpha-actinin family.

The protein localises to the nucleus membrane. The protein resides in the endoplasmic reticulum membrane. It localises to the golgi apparatus. It is found in the golgi stack membrane. Its subcellular location is the cytoplasm. The protein localises to the cytoskeleton. The protein resides in the microtubule organizing center. It localises to the centrosome. In terms of biological role, may function as linker between cellular membranes and the actin cytoskeleton. Required for normal development of fruiting bodies. This Dictyostelium discoideum (Social amoeba) protein is Interaptin (abpD).